The following is a 410-amino-acid chain: Succinyl-CoA:(R)-benzylsuccinate CoA-transferase subunit BbsE (410 aa).

This sequence belongs to the CoA-transferase III family. In terms of assembly, heterotetramer composed of 2 BbsE subunits and 2 BbsF subunits.

It catalyses the reaction (R)-2-benzylsuccinate + succinyl-CoA = (R)-2-benzylsuccinyl-CoA + succinate. The protein operates within xenobiotic degradation; toluene degradation. With respect to regulation, inhibited by (S)-benzylsuccinyl-CoA. In terms of biological role, catalyzes the reversible conversion of (R)-2-benzylsuccinate to (R)-2-benzylsuccinyl-CoA. Inactive with (S)-benzylsuccinate. This Thauera aromatica protein is Succinyl-CoA:(R)-benzylsuccinate CoA-transferase subunit BbsE (bbsE).